Consider the following 213-residue polypeptide: Adenylate kinase (213 aa).

14–19 (GSGKGT) contacts ATP. Positions 34 to 63 (SSGELFRSAIDSASPLGIKAAEYINQGLLV) are NMP. Residues Ser-35, Arg-40, 61-63 (LLV), 89-92 (GFPR), and Gln-96 contribute to the AMP site. The interval 129 to 162 (SRFICPSCKHVYNQNQGLSECPTCQMKLVRRSDD) is LID. Arg-130 is a binding site for ATP. Cys-133 and Cys-136 together coordinate Zn(2+). Position 139-140 (139-140 (VY)) interacts with ATP. Zn(2+) is bound by residues Cys-149 and Cys-152. AMP is bound by residues Arg-159 and Arg-170. Ala-198 is a binding site for ATP.

This sequence belongs to the adenylate kinase family. In terms of assembly, monomer.

The protein localises to the cytoplasm. It carries out the reaction AMP + ATP = 2 ADP. It participates in purine metabolism; AMP biosynthesis via salvage pathway; AMP from ADP: step 1/1. Its function is as follows. Catalyzes the reversible transfer of the terminal phosphate group between ATP and AMP. Plays an important role in cellular energy homeostasis and in adenine nucleotide metabolism. In Chlamydia abortus (strain DSM 27085 / S26/3) (Chlamydophila abortus), this protein is Adenylate kinase.